The following is an 861-amino-acid chain: MIGQITSGLFGGHDDSKKVKGTVVMMNKNVLDFTDLAGSLTGKIFDVLGQKVSFQLISSVQGDPTNGLQGKHSNPAYLENSLFTLTPLTAGSETAFGVTFDWNEEFGVPGAFIIKNMHINEFFLKSLTLEDVPNHGKVHFVCNSWVYPSLNYKSDRIFFANQPYLPSETPELLRKYRENELLTLRGDGTGKREAWDRIYDYDIYNDLGNPDQGKENVRTTLGGSAEYPYPRRGRTGRPPTRTDPKSESRIPLILSLDIYVPRDERFGHLKMSDFLTYALKSIVQFILPELHALFDGTPNEFDSFEDVLRLYEGRDQLPQGPLFKALTAAIPLEMIRELLRTDGEGILRFPTPLVIKDSKTAWRTDEEFAREMLAGVNPIIISRLQEFPPKSKLDPEAYGNQNSTITAEHIEDKLDGLTVDEAMNNNKLFILNHHDVIIPYLRRINTTITKTYASRTLLFLQDNGSLKPLAIELSLPHPDGDQFGVTSKVYTPSDQGVESSIWQLAKAYVAVNDTGVHQLISHWLNTHAVIEPFVIATNRQLSVLHPIHKLLYPHFRDTMNINASARQILVNAGGVLESTVFQSKFAMEMSAVVYKDWVFPDQALPADLVKRGVAVEDSSSPHGVRLLIEDYPYAVDGLEIWSAIKSWVTDYCSFYYGSDEEILKDNELQAWWKELREVGHGDKKNEPWWPEMKTPQELIDSCTTIIWIASALHAAVNFGQYPYAGYLPNRPTVSRRFMPEPGTPDYEELKRNPDKAFLKTITAQLQTLLGVSLVEILSRHTTDEIYLGQRESPEWTKDKEPLAAFDRFGKKLTDIEKQIIQRNGDNILTNRSGPVNAPYTLLFPTSEGGLTGKGIPNSVSI.

The PLAT domain occupies 29-160; it reads NVLDFTDLAG…NYKSDRIFFA (132 aa). The region spanning 163–861 is the Lipoxygenase domain; that stretch reads PYLPSETPEL…GKGIPNSVSI (699 aa). The disordered stretch occupies residues 220–246; that stretch reads TLGGSAEYPYPRRGRTGRPPTRTDPKS. The Fe cation site is built by His-522, His-527, His-713, Asn-717, and Ile-861.

This sequence belongs to the lipoxygenase family. Monomer. Fe cation is required as a cofactor. As to expression, expressed in tubers. Detected in sprouts and flowers. but not in leaves or stems.

It localises to the cytoplasm. It catalyses the reaction (9Z,12Z)-octadecadienoate + O2 = (9S)-hydroperoxy-(10E,12Z)-octadecadienoate. Its pathway is lipid metabolism; oxylipin biosynthesis. Plant lipoxygenases may be involved in a number of diverse aspects of plant physiology including growth and development, pest resistance, and senescence or responses to wounding. Catalyzes the hydroperoxidation of lipids containing a cis,cis-1,4-pentadiene structure. This Solanum tuberosum (Potato) protein is Probable linoleate 9S-lipoxygenase 7 (LOX1.7).